Consider the following 224-residue polypeptide: Glutathione S-transferase U1 (224 aa).

A GST N-terminal domain is found at 6-85 (ESVKLLGFWA…YIDQTWKNSP (80 aa)). Glutathione is bound by residues 16–17 (SP), 42–43 (NK), 56–57 (KV), and 69–70 (ES). Residues 90–217 (DPYEKAMARF…EKQIERMTKI (128 aa)) enclose the GST C-terminal domain. Threonine 151 carries the post-translational modification Phosphothreonine.

The protein belongs to the GST superfamily. Tau family.

It is found in the cytoplasm. The protein localises to the cytosol. It catalyses the reaction RX + glutathione = an S-substituted glutathione + a halide anion + H(+). Functionally, may be involved in the conjugation of reduced glutathione to a wide number of exogenous and endogenous hydrophobic electrophiles and have a detoxification role against certain herbicides. The chain is Glutathione S-transferase U1 (GSTU1) from Arabidopsis thaliana (Mouse-ear cress).